Here is a 330-residue protein sequence, read N- to C-terminus: Urokinase plasminogen activator surface receptor (330 aa).

An N-terminal signal peptide occupies residues 1–20 (MGQPLLLLLLVYTYIPGSWG). 3 UPAR/Ly6 domains span residues 21–112 (LRCL…RNRY), 113–208 (LECA…PPNG), and 209–300 (LQCY…PGKG). 3 disulfides stabilise this stretch: cysteine 23–cysteine 44, cysteine 26–cysteine 32, and cysteine 37–cysteine 65. A glycan (N-linked (GlcNAc...) asparagine) is linked at asparagine 28. An N-linked (GlcNAc...) asparagine glycan is attached at asparagine 72. 11 disulfides stabilise this stretch: cysteine 91/cysteine 96, cysteine 115/cysteine 142, cysteine 118/cysteine 125, cysteine 135/cysteine 164, cysteine 170/cysteine 187, cysteine 188/cysteine 193, cysteine 211/cysteine 239, cysteine 214/cysteine 222, cysteine 232/cysteine 258, cysteine 264/cysteine 282, and cysteine 283/cysteine 288. N-linked (GlcNAc...) asparagine glycans are attached at residues asparagine 179 and asparagine 189. Residue asparagine 279 is glycosylated (N-linked (GlcNAc...) asparagine). Residue glycine 300 is the site of GPI-anchor amidated glycine attachment. The propeptide at 301–330 (GAPKTSPAHLSFFVSLLLTARLWGATLLCT) is removed in mature form.

In terms of assembly, monomer. Interacts (via the UPAR/Ly6 domains) with SRPX2. Interacts with MRC2. Interacts with SORL1 (via N-terminal ectodomain); this interaction decreases PLAUR internalization. The ternary complex composed of PLAUR-PLAU-SERPINE1 also interacts with SORL1. Interacts with CD82; this interaction prevents PLAUR from binding to its high affinity ligand PLAU.

Its subcellular location is the cell membrane. Functionally, acts as a receptor for urokinase plasminogen activator. Plays a role in localizing and promoting plasmin formation. Mediates the proteolysis-independent signal transduction activation effects of U-PA. The polypeptide is Urokinase plasminogen activator surface receptor (PLAUR) (Bos taurus (Bovine)).